The primary structure comprises 81 residues: Small ribosomal subunit protein bS18 (81 aa).

The protein belongs to the bacterial ribosomal protein bS18 family. In terms of assembly, part of the 30S ribosomal subunit. Forms a tight heterodimer with protein bS6.

Its function is as follows. Binds as a heterodimer with protein bS6 to the central domain of the 16S rRNA, where it helps stabilize the platform of the 30S subunit. The sequence is that of Small ribosomal subunit protein bS18 from Parvibaculum lavamentivorans (strain DS-1 / DSM 13023 / NCIMB 13966).